We begin with the raw amino-acid sequence, 297 residues long: N-acetylmuramic acid 6-phosphate etherase (297 aa).

Residues 55–218 (AAAALKSGGR…STGAMVKFGK (164 aa)) enclose the SIS domain. Residue Glu83 is the Proton donor of the active site. Glu114 is a catalytic residue.

This sequence belongs to the GCKR-like family. MurNAc-6-P etherase subfamily. As to quaternary structure, homodimer.

It carries out the reaction N-acetyl-D-muramate 6-phosphate + H2O = N-acetyl-D-glucosamine 6-phosphate + (R)-lactate. It functions in the pathway amino-sugar metabolism; 1,6-anhydro-N-acetylmuramate degradation. It participates in amino-sugar metabolism; N-acetylmuramate degradation. Its pathway is cell wall biogenesis; peptidoglycan recycling. Functionally, specifically catalyzes the cleavage of the D-lactyl ether substituent of MurNAc 6-phosphate, producing GlcNAc 6-phosphate and D-lactate. Together with AnmK, is also required for the utilization of anhydro-N-acetylmuramic acid (anhMurNAc) either imported from the medium or derived from its own cell wall murein, and thus plays a role in cell wall recycling. This is N-acetylmuramic acid 6-phosphate etherase from Salmonella typhi.